The primary structure comprises 445 residues: Argininosuccinate synthase (445 aa).

Residues 17–25 and alanine 43 contribute to the ATP site; that span reads AFSGGLDTS. Tyrosine 99 is an L-citrulline binding site. ATP is bound by residues glycine 129 and threonine 131. The L-aspartate site is built by threonine 131, asparagine 135, and aspartate 136. Asparagine 135 lines the L-citrulline pocket. Aspartate 136 is a binding site for ATP. L-citrulline-binding residues include arginine 139 and serine 192. Aspartate 194 contacts ATP. Residues threonine 201, glutamate 203, and glutamate 280 each contribute to the L-citrulline site.

The protein belongs to the argininosuccinate synthase family. Type 2 subfamily. In terms of assembly, homotetramer.

The protein resides in the cytoplasm. It catalyses the reaction L-citrulline + L-aspartate + ATP = 2-(N(omega)-L-arginino)succinate + AMP + diphosphate + H(+). Its pathway is amino-acid biosynthesis; L-arginine biosynthesis; L-arginine from L-ornithine and carbamoyl phosphate: step 2/3. In Gemmatimonas aurantiaca (strain DSM 14586 / JCM 11422 / NBRC 100505 / T-27), this protein is Argininosuccinate synthase.